Reading from the N-terminus, the 498-residue chain is Tumor necrosis factor receptor superfamily member 8 (498 aa).

Residues 1-18 (MSALLTAAGLLFLGMLQA) form the signal peptide. Residues 19-287 (FPTDRPLKTT…STGTPFLDPG (269 aa)) are Extracellular-facing. 2 TNFR-Cys repeats span residues 68–105 (QCAP…PRIC) and 106–146 (ECQP…DTIC). 5 disulfide bridges follow: C69/C81, C84/C97, C87/C105, C107/C121, and C128/C146. Residues 142–168 (KDTICELPSSGSGPNCSNPGDRKTLTS) are disordered. Residues 149 to 160 (PSSGSGPNCSNP) are compositionally biased toward low complexity. Residues N156, N183, and N229 are each glycosylated (N-linked (GlcNAc...) asparagine). The interval 204–256 (ELVKVPESSSSKAREPSPDPGNAEKNMTLELPSPGTLPDISTSENSKEPASTA) is disordered. Residues 242 to 256 (DISTSENSKEPASTA) are compositionally biased toward polar residues. The helical transmembrane segment at 288 to 308 (PVLFWVAMVVLLVGSGSFLLC) threads the bilayer. At 309-498 (YWKACRRRFQ…DHGPTTVSEK (190 aa)) the chain is on the cytoplasmic side. Over residues 338 to 358 (DSCPTEKLTQPQRSGSVTDPS) the composition is skewed to polar residues. Disordered stretches follow at residues 338–370 (DSCP…SPPP), 389–411 (LDDS…VSTE), and 436–498 (EVPE…VSEK). Residues S339 and S353 each carry the phosphoserine modification. Basic and acidic residues-rich tracts occupy residues 402 to 411 (EPPEPRVSTE), 456 to 465 (EVDHAPHYPE), and 484 to 498 (EGGK…VSEK).

It belongs to the TNFR8 family. As to quaternary structure, interacts with TRAF1, TRAF2, TRAF3 and TRAF5. In terms of tissue distribution, detected in thymus and in activated splenocytes.

The protein localises to the cell membrane. Receptor for TNFSF8/CD30L. May play a role in the regulation of cellular growth and transformation of activated lymphoblasts. Regulates gene expression through activation of NF-kappa-B. The sequence is that of Tumor necrosis factor receptor superfamily member 8 from Mus musculus (Mouse).